The following is a 163-amino-acid chain: Auxin-responsive protein IAA5 (163 aa).

Positions 15–19 (LRLGL) match the EAR-like (transcriptional repression) motif. The PB1 domain maps to 74 to 160 (SSYVKVSVDG…KRLRIMKRSC (87 aa)).

Belongs to the Aux/IAA family. As to quaternary structure, homodimers and heterodimers. Highly expressed in stems and flowers.

Its subcellular location is the nucleus. Aux/IAA proteins are short-lived transcriptional factors that function as repressors of early auxin response genes at low auxin concentrations. Repression is thought to result from the interaction with auxin response factors (ARFs), proteins that bind to the auxin-responsive promoter element (AuxRE). Formation of heterodimers with ARF proteins may alter their ability to modulate early auxin response genes expression. This is Auxin-responsive protein IAA5 (IAA5) from Arabidopsis thaliana (Mouse-ear cress).